The following is a 191-amino-acid chain: Fe/S biogenesis protein NfuA (191 aa).

2 residues coordinate [4Fe-4S] cluster: Cys149 and Cys152.

Belongs to the NfuA family. Homodimer. [4Fe-4S] cluster is required as a cofactor.

Its function is as follows. Involved in iron-sulfur cluster biogenesis. Binds a 4Fe-4S cluster, can transfer this cluster to apoproteins, and thereby intervenes in the maturation of Fe/S proteins. Could also act as a scaffold/chaperone for damaged Fe/S proteins. The sequence is that of Fe/S biogenesis protein NfuA from Salmonella arizonae (strain ATCC BAA-731 / CDC346-86 / RSK2980).